The primary structure comprises 212 residues: Phosphoribosyl-dephospho-CoA transferase (212 aa).

Residues Asp139 and Asp141 contribute to the active site.

Belongs to the MdcG family.

It catalyses the reaction apo-[malonate decarboxylase ACP] + 2'-(5''-triphospho-alpha-D-ribosyl)-3'-dephospho-CoA = holo-[malonate decarboxylase ACP] + diphosphate. Transfers 2'-(5-triphosphoribosyl)-3'-dephosphocoenzyme-A to the apo-[acyl-carrier-protein] of the malonate decarboxylase to yield holo-[acyl-carrier-protein]. The protein is Phosphoribosyl-dephospho-CoA transferase of Azotobacter vinelandii (strain DJ / ATCC BAA-1303).